We begin with the raw amino-acid sequence, 636 residues long: Protein cueball (636 aa).

Residues 1–27 form the signal peptide; sequence MKLCTSQQFGVAVLFIVLNICSPLADA. Topologically, residues 28 to 517 are extracellular; it reads SPIAWDFAVT…ADGPSSLRSG (490 aa). Residues Asn83 and Asn109 are each glycosylated (N-linked (GlcNAc...) asparagine). 3 LDL-receptor class B repeats span residues 122–169, 170–214, and 215–260; these read RNLF…DICR, RQLY…DQLS, and DRIF…TEDT. Asn190 carries N-linked (GlcNAc...) asparagine glycosylation. Residues Asn285 and Asn339 are each glycosylated (N-linked (GlcNAc...) asparagine). 2 EGF-like domains span residues 350-384 and 419-456; these read RMDA…ARCE and EYYK…TRCE. 5 disulfides stabilise this stretch: Cys359–Cys372, Cys374–Cys383, Cys423–Cys433, Cys427–Cys444, and Cys446–Cys455. N-linked (GlcNAc...) asparagine glycans are attached at residues Asn449, Asn458, and Asn493. A helical transmembrane segment spans residues 518-538; sequence SVIIVLVVGIVSSLALVAVIV. Topologically, residues 539 to 636 are cytoplasmic; that stretch reads HGLRLIYKPK…IHNMEDDLLT (98 aa).

The protein belongs to the cueball family.

It is found in the cell membrane. Functionally, has a role in spermatogenesis and oogenesis. The polypeptide is Protein cueball (Drosophila virilis (Fruit fly)).